The following is a 446-amino-acid chain: Actin-related protein 6 (446 aa).

Positions 1-11 (MTGRGGAKKSR) are enriched in basic residues. The segment at 1 to 24 (MTGRGGAKKSRAAGPAPPTTTLVL) is disordered.

Belongs to the actin family. ARP6 subfamily. In terms of assembly, component of the SWR1 chromatin remodeling complex.

It is found in the cytoplasm. Its subcellular location is the cytoskeleton. It localises to the nucleus. Its function is as follows. Component of the SWR1 complex which mediates the ATP-dependent exchange of histone H2A for the H2A variant H2A.Z leading to transcriptional regulation of selected genes by chromatin remodeling. Involved in chromosome stability. This chain is Actin-related protein 6 (arp-6), found in Neurospora crassa (strain ATCC 24698 / 74-OR23-1A / CBS 708.71 / DSM 1257 / FGSC 987).